The chain runs to 174 residues: Peptide methionine sulfoxide reductase MsrA (174 aa).

Cys11 is a catalytic residue.

It belongs to the MsrA Met sulfoxide reductase family.

It catalyses the reaction L-methionyl-[protein] + [thioredoxin]-disulfide + H2O = L-methionyl-(S)-S-oxide-[protein] + [thioredoxin]-dithiol. The catalysed reaction is [thioredoxin]-disulfide + L-methionine + H2O = L-methionine (S)-S-oxide + [thioredoxin]-dithiol. In terms of biological role, has an important function as a repair enzyme for proteins that have been inactivated by oxidation. Catalyzes the reversible oxidation-reduction of methionine sulfoxide in proteins to methionine. This chain is Peptide methionine sulfoxide reductase MsrA, found in Nitratiruptor sp. (strain SB155-2).